Consider the following 216-residue polypeptide: Thiamine-phosphate synthase (216 aa).

4-amino-2-methyl-5-(diphosphooxymethyl)pyrimidine-binding positions include 37–41 (QVRSK) and Asp-68. Positions 69 and 93 each coordinate Mg(2+). Thr-112 is a binding site for 4-amino-2-methyl-5-(diphosphooxymethyl)pyrimidine. 140 to 142 (TPT) contacts 2-[(2R,5Z)-2-carboxy-4-methylthiazol-5(2H)-ylidene]ethyl phosphate. Lys-143 serves as a coordination point for 4-amino-2-methyl-5-(diphosphooxymethyl)pyrimidine.

This sequence belongs to the thiamine-phosphate synthase family. Requires Mg(2+) as cofactor.

The enzyme catalyses 2-[(2R,5Z)-2-carboxy-4-methylthiazol-5(2H)-ylidene]ethyl phosphate + 4-amino-2-methyl-5-(diphosphooxymethyl)pyrimidine + 2 H(+) = thiamine phosphate + CO2 + diphosphate. It carries out the reaction 2-(2-carboxy-4-methylthiazol-5-yl)ethyl phosphate + 4-amino-2-methyl-5-(diphosphooxymethyl)pyrimidine + 2 H(+) = thiamine phosphate + CO2 + diphosphate. The catalysed reaction is 4-methyl-5-(2-phosphooxyethyl)-thiazole + 4-amino-2-methyl-5-(diphosphooxymethyl)pyrimidine + H(+) = thiamine phosphate + diphosphate. It participates in cofactor biosynthesis; thiamine diphosphate biosynthesis; thiamine phosphate from 4-amino-2-methyl-5-diphosphomethylpyrimidine and 4-methyl-5-(2-phosphoethyl)-thiazole: step 1/1. Condenses 4-methyl-5-(beta-hydroxyethyl)thiazole monophosphate (THZ-P) and 2-methyl-4-amino-5-hydroxymethyl pyrimidine pyrophosphate (HMP-PP) to form thiamine monophosphate (TMP). This chain is Thiamine-phosphate synthase, found in Corynebacterium efficiens (strain DSM 44549 / YS-314 / AJ 12310 / JCM 11189 / NBRC 100395).